The sequence spans 382 residues: Succinyl-diaminopimelate desuccinylase (382 aa).

Zn(2+) is bound at residue His-73. Asp-75 is an active-site residue. Residue Asp-106 participates in Zn(2+) binding. The active-site Proton acceptor is Glu-140. Glu-141, Glu-169, and His-355 together coordinate Zn(2+).

Belongs to the peptidase M20A family. DapE subfamily. As to quaternary structure, homodimer. It depends on Zn(2+) as a cofactor. Co(2+) is required as a cofactor.

It catalyses the reaction N-succinyl-(2S,6S)-2,6-diaminopimelate + H2O = (2S,6S)-2,6-diaminopimelate + succinate. It participates in amino-acid biosynthesis; L-lysine biosynthesis via DAP pathway; LL-2,6-diaminopimelate from (S)-tetrahydrodipicolinate (succinylase route): step 3/3. Functionally, catalyzes the hydrolysis of N-succinyl-L,L-diaminopimelic acid (SDAP), forming succinate and LL-2,6-diaminopimelate (DAP), an intermediate involved in the bacterial biosynthesis of lysine and meso-diaminopimelic acid, an essential component of bacterial cell walls. The protein is Succinyl-diaminopimelate desuccinylase of Cellvibrio japonicus (strain Ueda107) (Pseudomonas fluorescens subsp. cellulosa).